The following is a 405-amino-acid chain: MAKLTVSDLELSGKKVLMRVDFNVPIKAGVIGNDNRIVAALPTIKYVLENNGRAILFSHLGRIKSEDDKKELSLAPVAARLGELLGKNVKFVPHTRGEELESAINALQDGEVLMVENTRFEDVVDGVEVKNESKNNPELGKYWAGLGDDLFINDAFGTAHRAHASNVGIASNVSQVAAGFLMEKEIKFLGDAVANPVRPFVAIIGGAKVSDKIEIVKSLLAKADKVIVGGGMAYTFDAAKGEKIGNSLFEADKVELAKELMAEAGDKLVLPVDSIAADAFSNDAKTEVVDATAGIPDGYMGLDIGPKSVKLLQDTLADAKTVVWNGPMGVFEMPNFAKGTLAIGEELVKVTENGGTTIVGGGDSTAAVQQLGVADKLSHISTGGGASLEYLEGKELPGIASISEK.

Substrate contacts are provided by residues 21 to 23 (DFN), arginine 36, 59 to 62 (HLGR), arginine 119, and arginine 161. Residues lysine 212, glycine 301, glutamate 332, and 361–364 (GGDS) contribute to the ATP site.

It belongs to the phosphoglycerate kinase family. Monomer.

The protein resides in the cytoplasm. It carries out the reaction (2R)-3-phosphoglycerate + ATP = (2R)-3-phospho-glyceroyl phosphate + ADP. It participates in carbohydrate degradation; glycolysis; pyruvate from D-glyceraldehyde 3-phosphate: step 2/5. This Leuconostoc citreum (strain KM20) protein is Phosphoglycerate kinase.